The sequence spans 391 residues: Decapping nuclease RAI1 (391 aa).

A divalent metal cation is bound at residue E174. E223 contacts substrate. A divalent metal cation-binding residues include D225, E244, and L245. Positions 246 and 270 each coordinate substrate.

It belongs to the DXO/Dom3Z family. In terms of assembly, interacts with RAT1; the interaction is direct, stabilizes RAT1 protein structure and stimulates its exoribonuclease activity. The interaction also stimulates RAI1 pyrophosphohydrolase activity, probably by recruiting it to mRNA substrates. The cofactor is a divalent metal cation.

It is found in the nucleus. The enzyme catalyses a 5'-end NAD(+)-phospho-ribonucleoside in mRNA + H2O = a 5'-end phospho-ribonucleoside in mRNA + NAD(+) + H(+). The catalysed reaction is a 5'-end (N(7)-methyl 5'-triphosphoguanosine)-ribonucleoside-ribonucleotide in mRNA + H2O = a (N(7)-methyl 5'-triphosphoguanosine)-nucleoside + a 5'-end phospho-ribonucleoside in mRNA + H(+). It carries out the reaction a 5'-end triphospho-ribonucleoside in mRNA + H2O = a 5'-end phospho-ribonucleoside in mRNA + diphosphate + H(+). In terms of biological role, decapping enzyme for NAD-capped RNAs: specifically hydrolyzes the nicotinamide adenine dinucleotide (NAD) cap from a subset of RNAs by removing the entire NAD moiety from the 5'-end of an NAD-capped RNA. The NAD-cap is present at the 5'-end of some RNAs and snoRNAs. In contrast to the canonical 5'-end N7 methylguanosine (m7G) cap, the NAD cap promotes mRNA decay. Also acts as a non-canonical decapping enzyme that removes the entire cap structure of m7G capped or incompletely capped RNAs. Has decapping activity toward incomplete 5'-end m7G cap mRNAs such as unmethylated 5'-end-capped RNA (cap0), while it has no activity toward 2'-O-ribose methylated m7G cap (cap1). Also possesses RNA 5'-pyrophosphohydrolase activity by hydrolyzing the 5'-end triphosphate to release pyrophosphates. Stimulates exoribonuclease activity of Rat1, allowing it to degrade RNAs with stable secondary structure more effectively. The chain is Decapping nuclease RAI1 from Candida albicans (strain SC5314 / ATCC MYA-2876) (Yeast).